The sequence spans 588 residues: Neuropeptide-like 1 (588 aa).

Positions 1-179 (MQCIPKKTFM…DPEVLEYSPD (179 aa)) are excised as a propeptide. Residues 115-143 (NGDLPITIQERESDNDDEEKRSASSSDNV) are disordered. Thr194 carries the threonine amide modification. 3 positions are modified to serine amide: Ser210, Ser227, and Ser244. Position 260 is a tyrosine amide (Tyr260). Glu281 bears the Glutamic acid 1-amide mark. A propeptide spanning residues 285–299 (SIASLARSGDWPSVA) is cleaved from the precursor. Tyr318 is modified (tyrosine amide). A propeptide spanning residues 321–588 (SLSDDREAPS…SNSHIAPRSM (268 aa)) is cleaved from the precursor. The tract at residues 342–382 (GNSEGKENEWQATPFTVSEDLDEGKAKNRSNRRIEASQTRH) is disordered.

Its subcellular location is the secreted. The protein is Neuropeptide-like 1 of Camponotus floridanus (Florida carpenter ant).